Here is a 547-residue protein sequence, read N- to C-terminus: Flagellar hook-associated protein 1 (547 aa).

The protein belongs to the flagella basal body rod proteins family.

It localises to the secreted. The protein resides in the bacterial flagellum. This is Flagellar hook-associated protein 1 (flgK) from Escherichia coli (strain K12).